A 145-amino-acid polypeptide reads, in one-letter code: Transcription antitermination protein NusB (145 aa).

It belongs to the NusB family.

In terms of biological role, involved in transcription antitermination. Required for transcription of ribosomal RNA (rRNA) genes. Binds specifically to the boxA antiterminator sequence of the ribosomal RNA (rrn) operons. The polypeptide is Transcription antitermination protein NusB (Ruminiclostridium cellulolyticum (strain ATCC 35319 / DSM 5812 / JCM 6584 / H10) (Clostridium cellulolyticum)).